Reading from the N-terminus, the 188-residue chain is FMN-dependent NADPH-azoreductase (188 aa).

It belongs to the azoreductase type 2 family. As to quaternary structure, homotetramer. Requires FMN as cofactor.

Catalyzes the reductive cleavage of azo bond in aromatic azo compounds to the corresponding amines. Requires NADPH, but not NADH, as an electron donor for its activity. The protein is FMN-dependent NADPH-azoreductase (azo1) of Staphylococcus haemolyticus (strain JCSC1435).